A 525-amino-acid polypeptide reads, in one-letter code: 2,3-bisphosphoglycerate-independent phosphoglycerate mutase (525 aa).

Residues Asp18 and Ser68 each coordinate Mn(2+). Catalysis depends on Ser68, which acts as the Phosphoserine intermediate. Residues His129, 159–160 (RD), Arg194, Arg200, 269–272 (RADR), and Lys345 contribute to the substrate site. Residues Asp413, His417, Asp454, His455, and His473 each contribute to the Mn(2+) site.

Belongs to the BPG-independent phosphoglycerate mutase family. As to quaternary structure, monomer. Mn(2+) serves as cofactor.

The enzyme catalyses (2R)-2-phosphoglycerate = (2R)-3-phosphoglycerate. The protein operates within carbohydrate degradation; glycolysis; pyruvate from D-glyceraldehyde 3-phosphate: step 3/5. Catalyzes the interconversion of 2-phosphoglycerate and 3-phosphoglycerate. This chain is 2,3-bisphosphoglycerate-independent phosphoglycerate mutase, found in Chromohalobacter salexigens (strain ATCC BAA-138 / DSM 3043 / CIP 106854 / NCIMB 13768 / 1H11).